Consider the following 269-residue polypeptide: tRNA pseudouridine synthase A (269 aa).

D55 (nucleophile) is an active-site residue. A substrate-binding site is contributed by Y111.

The protein belongs to the tRNA pseudouridine synthase TruA family.

It catalyses the reaction uridine(38/39/40) in tRNA = pseudouridine(38/39/40) in tRNA. Formation of pseudouridine at positions 38, 39 and 40 in the anticodon stem and loop of transfer RNAs. This is tRNA pseudouridine synthase A from Methanosarcina barkeri (strain Fusaro / DSM 804).